We begin with the raw amino-acid sequence, 266 residues long: Vitamin B12-binding protein (266 aa).

The signal sequence occupies residues 1-22; it reads MAKSLFRALVALSFLAPLWLNA. A Fe/B12 periplasmic-binding domain is found at 25–266; that stretch reads RVITLSPANT…QLCNALSQVD (242 aa). Residues Tyr50 and 242-246 each bind cyanocob(III)alamin; that span reads DWFER. Cys183 and Cys259 are disulfide-bonded.

This sequence belongs to the BtuF family. In terms of assembly, the complex is composed of two ATP-binding proteins (BtuD), two transmembrane proteins (BtuC) and a solute-binding protein (BtuF).

The protein resides in the periplasm. Its function is as follows. Part of the ABC transporter complex BtuCDF involved in vitamin B12 import. Binds vitamin B12 and delivers it to the periplasmic surface of BtuC. This is Vitamin B12-binding protein (btuF) from Escherichia coli (strain K12).